A 370-amino-acid chain; its full sequence is NADH-quinone oxidoreductase subunit D (370 aa).

This sequence belongs to the complex I 49 kDa subunit family. NDH-1 is composed of 14 different subunits. Subunits NuoB, C, D, E, F, and G constitute the peripheral sector of the complex.

The protein localises to the cell membrane. It carries out the reaction a quinone + NADH + 5 H(+)(in) = a quinol + NAD(+) + 4 H(+)(out). Functionally, NDH-1 shuttles electrons from NADH, via FMN and iron-sulfur (Fe-S) centers, to quinones in the respiratory chain. The immediate electron acceptor for the enzyme in this species is believed to be a menaquinone. Couples the redox reaction to proton translocation (for every two electrons transferred, four hydrogen ions are translocated across the cytoplasmic membrane), and thus conserves the redox energy in a proton gradient. The protein is NADH-quinone oxidoreductase subunit D of Desulfitobacterium hafniense (strain Y51).